The sequence spans 125 residues: Small ribosomal subunit protein uS13 (125 aa).

It belongs to the universal ribosomal protein uS13 family. Part of the 30S ribosomal subunit. Forms a loose heterodimer with protein S19. Forms two bridges to the 50S subunit in the 70S ribosome.

Its function is as follows. Located at the top of the head of the 30S subunit, it contacts several helices of the 16S rRNA. In the 70S ribosome it contacts the 23S rRNA (bridge B1a) and protein L5 of the 50S subunit (bridge B1b), connecting the 2 subunits; these bridges are implicated in subunit movement. Contacts the tRNAs in the A and P-sites. This Granulibacter bethesdensis (strain ATCC BAA-1260 / CGDNIH1) protein is Small ribosomal subunit protein uS13.